The sequence spans 394 residues: N-acetylgalactosamine-6-phosphate deacetylase (394 aa).

Glutamate 137 lines the Zn(2+) pocket. Substrate is bound at residue 148–149; it reads CH. Histidine 201 and histidine 222 together coordinate Zn(2+). Residues 225–226, arginine 233, and 254–257 contribute to the substrate site; these read NG and DGQH. Catalysis depends on aspartate 280, which acts as the Proton donor/acceptor. 313 to 315 is a binding site for substrate; sequence LAG.

It belongs to the metallo-dependent hydrolases superfamily. NagA family.

The protein resides in the cytoplasm. The enzyme catalyses N-acetyl-D-galactosamine 6-phosphate + H2O = D-galactosamine 6-phosphate + acetate. The catalysed reaction is N-acetyl-D-glucosamine 6-phosphate + H2O = D-glucosamine 6-phosphate + acetate. Functionally, involved in the pathway of N-acetyl-D-galactosamine degradation. Catalyzes the conversion of N-acetyl-D-galactosamine 6-phosphate to D-galactosamine 6-phosphate and acetate. It can also catalyze the conversion of N-acetyl-D-glucosamine 6-phosphate. This chain is N-acetylgalactosamine-6-phosphate deacetylase, found in Shewanella sp. (strain ANA-3).